Here is a 127-residue protein sequence, read N- to C-terminus: Fluoride-specific ion channel FluC (127 aa).

Transmembrane regions (helical) follow at residues 4–24, 39–59, 68–88, and 102–122; these read LDYL…YLVS, GTII…FAAI, AILF…TFTY, and VAYA…GMIL. 2 residues coordinate Na(+): Gly78 and Thr81.

This sequence belongs to the fluoride channel Fluc/FEX (TC 1.A.43) family.

Its subcellular location is the cell inner membrane. The catalysed reaction is fluoride(in) = fluoride(out). With respect to regulation, na(+) is not transported, but it plays an essential structural role and its presence is essential for fluoride channel function. In terms of biological role, fluoride-specific ion channel. Important for reducing fluoride concentration in the cell, thus reducing its toxicity. This Thermotoga maritima (strain ATCC 43589 / DSM 3109 / JCM 10099 / NBRC 100826 / MSB8) protein is Fluoride-specific ion channel FluC.